Consider the following 287-residue polypeptide: Bifunctional protein FolD (287 aa).

Residues 166–168 and Ile232 contribute to the NADP(+) site; that span reads GAS.

This sequence belongs to the tetrahydrofolate dehydrogenase/cyclohydrolase family. In terms of assembly, homodimer.

The catalysed reaction is (6R)-5,10-methylene-5,6,7,8-tetrahydrofolate + NADP(+) = (6R)-5,10-methenyltetrahydrofolate + NADPH. It carries out the reaction (6R)-5,10-methenyltetrahydrofolate + H2O = (6R)-10-formyltetrahydrofolate + H(+). It functions in the pathway one-carbon metabolism; tetrahydrofolate interconversion. In terms of biological role, catalyzes the oxidation of 5,10-methylenetetrahydrofolate to 5,10-methenyltetrahydrofolate and then the hydrolysis of 5,10-methenyltetrahydrofolate to 10-formyltetrahydrofolate. The sequence is that of Bifunctional protein FolD from Buchnera aphidicola subsp. Baizongia pistaciae (strain Bp).